We begin with the raw amino-acid sequence, 443 residues long: Mitochondrial enolase superfamily member 1 (443 aa).

Substrate is bound by residues 24-26 (GSD) and Y34. S148 bears the Phosphoserine mark. Residue K220 coordinates substrate. The Proton donor/acceptor role is filled by K222. Mg(2+) is bound at residue D250. Residues N252, E276, E305, 355 to 357 (HAG), and E386 contribute to the substrate site. 2 residues coordinate Mg(2+): E276 and E305. The active site involves H355.

Belongs to the mandelate racemase/muconate lactonizing enzyme family. ENOSF1 subfamily. The cofactor is Mg(2+). Could be sumoylated.

The protein localises to the mitochondrion. The catalysed reaction is L-fuconate = 2-dehydro-3-deoxy-L-fuconate + H2O. Its function is as follows. Plays a role in the catabolism of L-fucose, a sugar that is part of the carbohydrates that are attached to cellular glycoproteins. Catalyzes the dehydration of L-fuconate to 2-keto-3-deoxy-L-fuconate by the abstraction of the 2-proton to generate an enediolate intermediate that is stabilized by the magnesium ion. May down-regulate thymidylate synthase activity, possibly already at the RNA level, by promoting the degradation of TYMS mRNA via an antisense RNA-based mechanism. The polypeptide is Mitochondrial enolase superfamily member 1 (ENOSF1) (Pongo abelii (Sumatran orangutan)).